Reading from the N-terminus, the 853-residue chain is MKADQKHTPMMQQYLKLKAENPEILLFYRMGDFYELFYDDAKKASQLLDISLTKRGSSNGEPIPMAGVPYHAVEGYLAKLVQLGESVAICEQIGNPATSKGPVERAVVRIVTPGTVTDEALLSERIDNLIASIYHHNGKFGYATLDITSGRFQLCEPETEEAMAAELQRTSPRELLFPEDFEPVNLMASRNGNRRRPVWEFELDTAKQQLNKQFGTRDLVGFGVEGAKLGLCAAGCLIQYVKDTQRTALPHIRSLTMDKQDHSVILDAATRRNLEITQNLGGGTDNTLAEVLDHTATAMGSRMLKRWLHQPMRNISALDQRLDAIGEMKDLALFTELQPTLKQIGDIERILARLALRSARPRDMARLRQAMEYLPELAETLTQLKHPYLTQLAQYASPVDEVSELLERAIKENPPVVIRDGGVIAEGYNAELDEWRDLAAGATEFLDKLEQEERERHGIDTLKVGYNNVHGFFIQVSRGQSHLVPPHYVRRQTLKNAERYIIPELKEHEDKVLSSKSKALAIEKKLWDELFDLLLPYLERLQNIASSVSQLDVLQNLAERADTLDYCRPTMTESAGVQIQAGRHPVVEQVMDEPFIANPIDLNDQRKMLIITGPNMGGKSTYMRQTALIALMAHIGCYVPAESATIGSIDRIFTRIGASDDLASGRSTFMVEMTETANILHNATPNSLVLMDEIGRGTSTYDGLSLAWASAEWLANQINAMTLFATHYFELTELPNQIPTLANVHLDAVEHGDSIAFMHAVQEGAASKSYGLAVAGLAGVPKAVIKNARAKLTQLEALSIDSPTSKPSGVDIANQLSLIPEPSEVEQALANVDPDDLTPRQALEELYRLKKLL.

613 to 620 (GPNMGGKS) is an ATP binding site.

This sequence belongs to the DNA mismatch repair MutS family.

This protein is involved in the repair of mismatches in DNA. It is possible that it carries out the mismatch recognition step. This protein has a weak ATPase activity. This is DNA mismatch repair protein MutS from Vibrio atlanticus (strain LGP32) (Vibrio splendidus (strain Mel32)).